The sequence spans 101 residues: MAKKSSIEKNNRRKRMVKNAAPKRERLKAIIADKTLPMEERFAATLKLAEMPRNSSATRVRLRCELSGRPRSNYRKNKLSRIALRELGSKGMVPGLVKSSW.

Residues 1-10 (MAKKSSIEKN) show a composition bias toward basic and acidic residues. Residues 1–23 (MAKKSSIEKNNRRKRMVKNAAPK) form a disordered region.

This sequence belongs to the universal ribosomal protein uS14 family. In terms of assembly, part of the 30S ribosomal subunit. Contacts proteins S3 and S10.

Binds 16S rRNA, required for the assembly of 30S particles and may also be responsible for determining the conformation of the 16S rRNA at the A site. The chain is Small ribosomal subunit protein uS14 from Bradyrhizobium diazoefficiens (strain JCM 10833 / BCRC 13528 / IAM 13628 / NBRC 14792 / USDA 110).